The chain runs to 394 residues: Putative fimbrial assembly protein FimD, serogroup D (394 aa).

This chain is Putative fimbrial assembly protein FimD, serogroup D (fimD), found in Dichelobacter nodosus (Bacteroides nodosus).